The sequence spans 483 residues: Glutamyl-tRNA(Gln) amidotransferase subunit A (483 aa).

Catalysis depends on charge relay system residues Lys77 and Ser152. The active-site Acyl-ester intermediate is Ser176.

Belongs to the amidase family. GatA subfamily. As to quaternary structure, heterotrimer of A, B and C subunits.

It catalyses the reaction L-glutamyl-tRNA(Gln) + L-glutamine + ATP + H2O = L-glutaminyl-tRNA(Gln) + L-glutamate + ADP + phosphate + H(+). Functionally, allows the formation of correctly charged Gln-tRNA(Gln) through the transamidation of misacylated Glu-tRNA(Gln) in organisms which lack glutaminyl-tRNA synthetase. The reaction takes place in the presence of glutamine and ATP through an activated gamma-phospho-Glu-tRNA(Gln). In Listeria monocytogenes serotype 4b (strain CLIP80459), this protein is Glutamyl-tRNA(Gln) amidotransferase subunit A.